A 297-amino-acid polypeptide reads, in one-letter code: Large ribosomal subunit protein uL3 (297 aa).

Disordered regions lie at residues 124–143 (NQKI…PVRQ) and 258–297 (MKEK…DKGE).

It belongs to the universal ribosomal protein uL3 family. Part of the 50S ribosomal subunit. Forms a cluster with proteins L14 and L19.

Functionally, one of the primary rRNA binding proteins, it binds directly near the 3'-end of the 23S rRNA, where it nucleates assembly of the 50S subunit. The protein is Large ribosomal subunit protein uL3 of Mycoplasma mobile (strain ATCC 43663 / 163K / NCTC 11711) (Mesomycoplasma mobile).